Here is a 362-residue protein sequence, read N- to C-terminus: Neutral protease 2 homolog MEP2 (362 aa).

Residues 1-19 form the signal peptide; it reads MLFPSIVAALAALANPVLS. Residues 20 to 177 constitute a propeptide that is removed on maturation; it reads LTIPQATGSE…SKAINPISAR (158 aa). Cystine bridges form between Cys184/Cys255 and Cys262/Cys280. Residue His304 participates in Zn(2+) binding. Residue Glu305 is part of the active site. Residues His308 and Asp319 each coordinate Zn(2+).

Belongs to the peptidase M35 family. The cofactor is Zn(2+).

The protein localises to the secreted. The enzyme catalyses Preferential cleavage of bonds with hydrophobic residues in P1'. Also 3-Asn-|-Gln-4 and 8-Gly-|-Ser-9 bonds in insulin B chain.. Secreted metalloproteinase that allows assimilation of proteinaceous substrates. Shows high activities on basic nuclear substrates such as histone and protamine. May be involved in virulence. The sequence is that of Neutral protease 2 homolog MEP2 (MEP2) from Coccidioides posadasii (strain C735) (Valley fever fungus).